The sequence spans 151 residues: Probable ribonuclease P/MRP protein subunit POP5 (151 aa).

This sequence belongs to the eukaryotic/archaeal RNase P protein component 2 family. As to quaternary structure, component of nuclear RNase P and RNase MRP ribonucleoproteins. Interacts with GAF1/RPP30.

It localises to the nucleus. It is found in the nucleolus. Its function is as follows. Essential protein required during embryogenesis. Component of ribonuclease P, a protein complex that generates mature tRNA molecules by cleaving their 5'-ends. Also a component of RNase MRP. The polypeptide is Probable ribonuclease P/MRP protein subunit POP5 (EMB1687) (Arabidopsis thaliana (Mouse-ear cress)).